The primary structure comprises 335 residues: Protein-arginine kinase (335 aa).

Residues 21–244 (IVMSSRIRLA…NQIIHEEKQI (224 aa)) enclose the Phosphagen kinase C-terminal domain. Residues 24–28 (SSRIR), His82, Arg115, 166–170 (RASVM), and 197–202 (RGIYGE) contribute to the ATP site.

Belongs to the ATP:guanido phosphotransferase family.

The enzyme catalyses L-arginyl-[protein] + ATP = N(omega)-phospho-L-arginyl-[protein] + ADP + H(+). In terms of biological role, catalyzes the specific phosphorylation of arginine residues in proteins. In Staphylococcus aureus (strain USA300), this protein is Protein-arginine kinase.